Here is a 514-residue protein sequence, read N- to C-terminus: MSVSKKPMVLVILDGYGYREEQQDNAIFSAKTPVMDALWANRPHTLIDASGLEVGLPDRQMGNSEVGHVNLGAGRIVYQDLTRLDVEIKDRVFFANPVLTGAVDKAKSAGKAVHIMGLLSAGGVHSHEDHIMAMVELAAERGAEKIYLHAFLDGRDTPPRSAESSLKKFEEKFAALGKGRVASIIGRYYAMDRDNRWDRVEKAYDLLTLAQGEFQADTAVAGLQAAYARDENDEFVKATVIRAEGQPDAAMEDGDALIFMNFRADRAREITRAFVNADFDGFARKKVVNVDFVMLTEYAADIKTAVAYPPASLVNTFGEWMAKNDKTQLRISETEKYAHVTFFFNGGVEESFKGEDRILINSPKVATYDLQPEMSSAELTEKLVAAIKSGKYDTIICNYPNGDMVGHTGVMEAAVKAVEALDHCVDEVAKAVESVGGQLLITADHGNAEQMRDPATGQAHTAHTNLPVPLIYVGDKNVKAVEGGKLSDIAPTMLSLMGMEIPQEMTGKPLFIVE.

Residues Asp-14 and Ser-64 each coordinate Mn(2+). Ser-64 serves as the catalytic Phosphoserine intermediate. Substrate contacts are provided by residues His-125, 155 to 156 (RD), Arg-187, Arg-193, 263 to 266 (RADR), and Lys-336. Residues Asp-403, His-407, Asp-444, His-445, and His-463 each coordinate Mn(2+).

The protein belongs to the BPG-independent phosphoglycerate mutase family. As to quaternary structure, monomer. The cofactor is Mn(2+).

It catalyses the reaction (2R)-2-phosphoglycerate = (2R)-3-phosphoglycerate. It functions in the pathway carbohydrate degradation; glycolysis; pyruvate from D-glyceraldehyde 3-phosphate: step 3/5. Functionally, catalyzes the interconversion of 2-phosphoglycerate and 3-phosphoglycerate. This Shigella dysenteriae serotype 1 (strain Sd197) protein is 2,3-bisphosphoglycerate-independent phosphoglycerate mutase.